The following is a 363-amino-acid chain: Ribosomal RNA small subunit methyltransferase H (363 aa).

S-adenosyl-L-methionine is bound by residues 55–57 (GGH), D75, D122, and Q129.

The protein belongs to the methyltransferase superfamily. RsmH family.

It is found in the cytoplasm. The enzyme catalyses cytidine(1402) in 16S rRNA + S-adenosyl-L-methionine = N(4)-methylcytidine(1402) in 16S rRNA + S-adenosyl-L-homocysteine + H(+). Its function is as follows. Specifically methylates the N4 position of cytidine in position 1402 (C1402) of 16S rRNA. The polypeptide is Ribosomal RNA small subunit methyltransferase H (Bordetella petrii (strain ATCC BAA-461 / DSM 12804 / CCUG 43448)).